We begin with the raw amino-acid sequence, 415 residues long: Phosphoribosylamine--glycine ligase (415 aa).

The region spanning 108-311 (KKIMEKYNIP…LMQHIIDLDE (204 aa)) is the ATP-grasp domain. An ATP-binding site is contributed by 134-191 (IENCEFPVVVKKDGLAAGKGVIIADTIEAARSAIEIMYGDEEEGTVVFETFLEGEEFS). The Mg(2+) site is built by E281 and N283.

It belongs to the GARS family. Requires Mg(2+) as cofactor. Mn(2+) is required as a cofactor.

The enzyme catalyses 5-phospho-beta-D-ribosylamine + glycine + ATP = N(1)-(5-phospho-beta-D-ribosyl)glycinamide + ADP + phosphate + H(+). Its pathway is purine metabolism; IMP biosynthesis via de novo pathway; N(1)-(5-phospho-D-ribosyl)glycinamide from 5-phospho-alpha-D-ribose 1-diphosphate: step 2/2. This is Phosphoribosylamine--glycine ligase from Staphylococcus aureus (strain MRSA252).